We begin with the raw amino-acid sequence, 316 residues long: Acetaldehyde dehydrogenase (316 aa).

Ser-11–Ile-14 contacts NAD(+). The Acyl-thioester intermediate role is filled by Cys-131. NAD(+)-binding positions include Ser-162 to Asn-170 and Asn-289.

It belongs to the acetaldehyde dehydrogenase family. Interacts with MhpE.

The catalysed reaction is acetaldehyde + NAD(+) + CoA = acetyl-CoA + NADH + H(+). The protein operates within aromatic compound metabolism; 3-phenylpropanoate degradation. Catalyzes the conversion of acetaldehyde to acetyl-CoA, using NAD(+) and coenzyme A. Is the final enzyme in the meta-cleavage pathway for the degradation of aromatic compounds. In Klebsiella pneumoniae (strain 342), this protein is Acetaldehyde dehydrogenase.